The chain runs to 486 residues: Galactose-3-O-sulfotransferase 4 (486 aa).

Residues 1–18 are Cytoplasmic-facing; the sequence is MGPLSPARTLRLWGPRSL. The chain crosses the membrane as a helical; Signal-anchor for type II membrane protein span at residues 19–39; that stretch reads GVALGVFMTIGFALQLLGGPF. Residues 40 to 486 are Lumenal-facing; that stretch reads QRRLPGLQLR…PLKTSRPLSP (447 aa). Asparagine 374 is a glycosylation site (N-linked (GlcNAc...) asparagine).

This sequence belongs to the galactose-3-O-sulfotransferase family. It depends on Mn(2+) as a cofactor. As to expression, expressed mainly in placenta, thymus, testis, ovary, spinal cord, trachea and adrenal gland and at low levels in brain, lung, spleen, prostate, small intestine, colon, stomach thyroid and lymph node.

It is found in the golgi apparatus. The protein localises to the golgi stack membrane. It functions in the pathway protein modification; carbohydrate sulfation. Catalyzes the transfer of sulfate to beta-1,3-linked galactose residues in O-linked glycoproteins. Good substrates include asialofetuin, Gal-beta-1,3-GalNAc and Gal-beta-1,3 (GlcNAc-beta-1,6)GalNAc. This Homo sapiens (Human) protein is Galactose-3-O-sulfotransferase 4 (GAL3ST4).